The following is a 409-amino-acid chain: Argininosuccinate synthase (409 aa).

ATP is bound by residues 10–18 and Ala37; that span reads AYSGGLDTS. Tyr90 and Ser95 together coordinate L-citrulline. Gly120 serves as a coordination point for ATP. L-aspartate contacts are provided by Thr122, Asn126, and Asp127. Asn126 contributes to the L-citrulline binding site. L-citrulline is bound by residues Arg130, Ser182, Ser191, Glu267, and Tyr279.

Belongs to the argininosuccinate synthase family. Type 1 subfamily. Homotetramer.

The protein localises to the cytoplasm. It carries out the reaction L-citrulline + L-aspartate + ATP = 2-(N(omega)-L-arginino)succinate + AMP + diphosphate + H(+). It participates in amino-acid biosynthesis; L-arginine biosynthesis; L-arginine from L-ornithine and carbamoyl phosphate: step 2/3. The chain is Argininosuccinate synthase from Aromatoleum aromaticum (strain DSM 19018 / LMG 30748 / EbN1) (Azoarcus sp. (strain EbN1)).